Here is a 204-residue protein sequence, read N- to C-terminus: MKIGVLALQGDVEEHANAFKEAGREVGVDVDVVEVKKPGDLKDIKALAIPGGESTTIGRLAKRTGLLDAVKKAIEGGVPALGTCAGAIFMAKEVKDAVVGATGQPVLGVMDIAVVRNAFGRQRESFEAEVVLENLGKLKAVFIRAPAFVRAWGSAKLLAPLRHNQLGLVYAAAVQNNMVATAFHPELTTTAVHKWVINMALGRF.

Residue 52–54 coordinates L-glutamine; that stretch reads GES. Cys84 serves as the catalytic Nucleophile. Residues Arg116 and 143–144 contribute to the L-glutamine site; that span reads IR. Active-site charge relay system residues include His184 and Glu186.

This sequence belongs to the glutaminase PdxT/SNO family. In terms of assembly, in the presence of PdxS, forms a dodecamer of heterodimers. Only shows activity in the heterodimer.

It catalyses the reaction aldehydo-D-ribose 5-phosphate + D-glyceraldehyde 3-phosphate + L-glutamine = pyridoxal 5'-phosphate + L-glutamate + phosphate + 3 H2O + H(+). The enzyme catalyses L-glutamine + H2O = L-glutamate + NH4(+). The protein operates within cofactor biosynthesis; pyridoxal 5'-phosphate biosynthesis. Functionally, catalyzes the hydrolysis of glutamine to glutamate and ammonia as part of the biosynthesis of pyridoxal 5'-phosphate. The resulting ammonia molecule is channeled to the active site of PdxS. The chain is Pyridoxal 5'-phosphate synthase subunit PdxT from Pyrobaculum aerophilum (strain ATCC 51768 / DSM 7523 / JCM 9630 / CIP 104966 / NBRC 100827 / IM2).